A 1392-amino-acid chain; its full sequence is Condensin complex subunit 1 (1392 aa).

The tract at residues 1–593 (MSPHNFEFHL…TGSKDSPSVP (593 aa)) is interaction with SMC2 and SMC4. 2 positions are modified to phosphoserine: Ser-20 and Ser-575. 3 disordered regions span residues 569–602 (EASTQDSHGDTDPGLTGSKDSPSVPEPEGSQSND), 945–966 (REEQEHRAKEPKEKTASSETTM), and 1293–1392 (FETG…RHRS). Residues 945–960 (REEQEHRAKEPKEKTA) show a composition bias toward basic and acidic residues. Phosphoserine is present on residues Ser-1300, Ser-1305, Ser-1320, and Ser-1323. Thr-1329 carries the phosphothreonine modification. Residues 1332–1353 (PRRTKPGRPQTQQRKKSQRKAK) carry the Bipartite nuclear localization signal motif. Basic residues predominate over residues 1344-1353 (QRKKSQRKAK). 4 positions are modified to phosphoserine: Ser-1358, Ser-1361, Ser-1362, and Ser-1367. The segment covering 1360-1373 (ESSEDELSAEMTEE) has biased composition (acidic residues). Phosphothreonine; by CDK1 is present on residues Thr-1375 and Thr-1380. Ser-1386 is subject to Phosphoserine.

Belongs to the CND1 (condensin subunit 1) family. As to quaternary structure, component of the condensin complex, which contains the SMC2 and SMC4 heterodimer, and three non SMC subunits that probably regulate the complex: NCAPH/BRRN1, NCAPD2/CAPD2 and NCAPG. Interacts with histones H1 and H3. In terms of processing, phosphorylated by CDK1. Its phosphorylation, as well as that of NCAPH and NCAPG subunits, activates the condensin complex and is required for chromosome condensation.

The protein localises to the nucleus. It is found in the cytoplasm. It localises to the chromosome. In terms of biological role, regulatory subunit of the condensin complex, a complex required for conversion of interphase chromatin into mitotic-like condense chromosomes. The condensin complex probably introduces positive supercoils into relaxed DNA in the presence of type I topoisomerases and converts nicked DNA into positive knotted forms in the presence of type II topoisomerases. May target the condensin complex to DNA via its C-terminal domain. May promote the resolution of double-strand DNA catenanes (intertwines) between sister chromatids. Condensin-mediated compaction likely increases tension in catenated sister chromatids, providing directionality for type II topoisomerase-mediated strand exchanges toward chromatid decatenation. Required for decatenation of non-centromeric ultrafine DNA bridges during anaphase. Early in neurogenesis, may play an essential role to ensure accurate mitotic chromosome condensation in neuron stem cells, ultimately affecting neuron pool and cortex size. The sequence is that of Condensin complex subunit 1 (Ncapd2) from Mus musculus (Mouse).